Here is a 78-residue protein sequence, read N- to C-terminus: Esculentin-2PLa (78 aa).

An N-terminal signal peptide occupies residues 1-22 (MFTTKKSMLLLFFLGTISLSLC). Positions 23-39 (EEERGADEEEGDGEKLM) are excised as a propeptide. Residues cysteine 72 and cysteine 78 are joined by a disulfide bond.

In terms of tissue distribution, expressed by the skin glands.

Its subcellular location is the secreted. Antimicrobial activity against the Gram-negative bacterium E.coli, the Gram-positive bacterium S.aureus and the yeast C.albicans. This is Esculentin-2PLa from Lithobates palustris (Pickerel frog).